The chain runs to 787 residues: DNA ligase (787 aa).

NAD(+) contacts are provided by residues D32–D36, S81–L82, and E121. Catalysis depends on K123, which acts as the N6-AMP-lysine intermediate. NAD(+)-binding residues include R144, E181, K297, and K321. Zn(2+) contacts are provided by C415, C418, C445, and C451. Residues V703–D787 form the BRCT domain.

This sequence belongs to the NAD-dependent DNA ligase family. LigA subfamily. Mg(2+) is required as a cofactor. It depends on Mn(2+) as a cofactor.

It catalyses the reaction NAD(+) + (deoxyribonucleotide)n-3'-hydroxyl + 5'-phospho-(deoxyribonucleotide)m = (deoxyribonucleotide)n+m + AMP + beta-nicotinamide D-nucleotide.. DNA ligase that catalyzes the formation of phosphodiester linkages between 5'-phosphoryl and 3'-hydroxyl groups in double-stranded DNA using NAD as a coenzyme and as the energy source for the reaction. It is essential for DNA replication and repair of damaged DNA. This chain is DNA ligase, found in Pseudomonas syringae pv. tomato (strain ATCC BAA-871 / DC3000).